A 590-amino-acid polypeptide reads, in one-letter code: Aspartate--tRNA(Asp/Asn) ligase (590 aa).

Residue glutamate 176 participates in L-aspartate binding. Residues 200–203 (QLFK) form an aspartate region. 2 residues coordinate L-aspartate: arginine 222 and histidine 451. 222 to 224 (RDE) serves as a coordination point for ATP. Glutamate 485 lines the ATP pocket. An L-aspartate-binding site is contributed by arginine 492. 537–540 (GIDR) is an ATP binding site.

Belongs to the class-II aminoacyl-tRNA synthetase family. Type 1 subfamily. As to quaternary structure, homodimer.

It localises to the cytoplasm. The catalysed reaction is tRNA(Asx) + L-aspartate + ATP = L-aspartyl-tRNA(Asx) + AMP + diphosphate. Its function is as follows. Aspartyl-tRNA synthetase with relaxed tRNA specificity since it is able to aspartylate not only its cognate tRNA(Asp) but also tRNA(Asn). Reaction proceeds in two steps: L-aspartate is first activated by ATP to form Asp-AMP and then transferred to the acceptor end of tRNA(Asp/Asn). The protein is Aspartate--tRNA(Asp/Asn) ligase of Ehrlichia canis (strain Jake).